Consider the following 302-residue polypeptide: Glycine--tRNA ligase alpha subunit (302 aa).

Belongs to the class-II aminoacyl-tRNA synthetase family. As to quaternary structure, tetramer of two alpha and two beta subunits.

It is found in the cytoplasm. It carries out the reaction tRNA(Gly) + glycine + ATP = glycyl-tRNA(Gly) + AMP + diphosphate. In Edwardsiella ictaluri (strain 93-146), this protein is Glycine--tRNA ligase alpha subunit.